A 90-amino-acid polypeptide reads, in one-letter code: MTDQQLDYQVTVEELSALMKRTAGVHVDPVTLRQQADDGFDTFGLDSLGLLGIVAELEKRYGLGLPEQAERCKTPADFLALVNGALKTGV.

Positions 9 to 90 (QVTVEELSAL…LVNGALKTGV (82 aa)) constitute a Carrier domain. Position 47 is an O-(pantetheine 4'-phosphoryl)serine (Ser-47).

4'-phosphopantetheine is transferred from CoA to a specific serine of the apo-ACP-like protein.

Functionally, involved in developmentally regulated synthesis of a compound biosynthetically related to polyketide antibiotics which is essential for spore color in Streptomyces coelicolor. The polypeptide is Probable acyl carrier protein (Streptomyces coelicolor (strain ATCC BAA-471 / A3(2) / M145)).